The chain runs to 253 residues: tRNA (guanine-N(1)-)-methyltransferase (253 aa).

Residues G113 and 133–138 (IGDYVL) contribute to the S-adenosyl-L-methionine site.

Belongs to the RNA methyltransferase TrmD family. In terms of assembly, homodimer.

Its subcellular location is the cytoplasm. The enzyme catalyses guanosine(37) in tRNA + S-adenosyl-L-methionine = N(1)-methylguanosine(37) in tRNA + S-adenosyl-L-homocysteine + H(+). In terms of biological role, specifically methylates guanosine-37 in various tRNAs. In Chloroflexus aurantiacus (strain ATCC 29366 / DSM 635 / J-10-fl), this protein is tRNA (guanine-N(1)-)-methyltransferase.